The sequence spans 624 residues: Probable Xaa-Pro aminopeptidase P (624 aa).

Residues Asp421, Asp432, Glu530, and Glu544 each coordinate Mn(2+).

It belongs to the peptidase M24B family. The cofactor is Mn(2+).

The catalysed reaction is Release of any N-terminal amino acid, including proline, that is linked to proline, even from a dipeptide or tripeptide.. Its function is as follows. Catalyzes the removal of a penultimate prolyl residue from the N-termini of peptides. The protein is Probable Xaa-Pro aminopeptidase P (AMPP) of Arthroderma otae (strain ATCC MYA-4605 / CBS 113480) (Microsporum canis).